Here is a 533-residue protein sequence, read N- to C-terminus: MMSLESLWLWTFAISFIVLIAYLIGTWNHDFFSKRNIPSLKTVPFLGNMGPLVLRKASFAEHSQNIYNRLKGYKYGGMFEFMNPVLVLRDPELIKMVTVKDFEYFLDHRAPISEEAEPMFGKNLFNLRGHRWKEMRSTLSPAFTSSKMKNMFVLVSECGKQLGEFLMECSRDKNKKTEGCKIEREGDLLTVELKDLYTRYTNDVIATSAFGIGCDSLKNPKNEFFQMGKDVTNFGGIRQFIFLGYLFSPRLMKYLNLKFLSSKATEFFRFLVHNTMDTRKTKGIIRPDMIHLLMQAKEGTLKSEENGETNGKIASKPKWDDDDLTAQAVLFFFAGFDTASTLLCFMSHLLATNPDVQNRLQDEIDQSLEENDGKLTYEAIHSMKYLDMVVSESLRLYPPAIFTDRKCVKNYRLPMEPSYTLEPGDAVWIPIYAIHHDPKYYPNPEKFDPERFSDENKDNIKPFTYLPFGSGPRNCIGNRFALMESKIALVHLLCRFNLKVVSKTPIPIKITKKGFNMTVDGGFWLGLEERTNQ.

A heme-binding site is contributed by Cys-475.

This sequence belongs to the cytochrome P450 family. Heme serves as cofactor.

Its subcellular location is the endoplasmic reticulum membrane. The protein localises to the microsome membrane. This Blattella germanica (German cockroach) protein is Cytochrome P450 9e2 (CYP9E2).